Here is a 47-residue protein sequence, read N- to C-terminus: Defensin-2 (47 aa).

Disulfide bonds link Cys3–Cys47, Cys14–Cys35, Cys20–Cys41, and Cys24–Cys43.

It belongs to the DEFL family. Epidermis and vascular bundles of pods, stems, roots, leaves and wet or dry seeds.

In terms of biological role, possesses antifungal activity sensitive to inorganic cations. The sequence is that of Defensin-2 from Pisum sativum (Garden pea).